A 288-amino-acid polypeptide reads, in one-letter code: Energy-coupling factor transporter ATP-binding protein EcfA2 (288 aa).

Residues 2–244 (IKFEKVNYTY…VDFLKAHELG (243 aa)) form the ABC transporter domain. 39–46 (GHTGSGKS) contributes to the ATP binding site.

The protein belongs to the ABC transporter superfamily. Energy-coupling factor EcfA family. In terms of assembly, forms a stable energy-coupling factor (ECF) transporter complex composed of 2 membrane-embedded substrate-binding proteins (S component), 2 ATP-binding proteins (A component) and 2 transmembrane proteins (T component).

It is found in the cell membrane. ATP-binding (A) component of a common energy-coupling factor (ECF) ABC-transporter complex. Unlike classic ABC transporters this ECF transporter provides the energy necessary to transport a number of different substrates. This is Energy-coupling factor transporter ATP-binding protein EcfA2 from Lactococcus lactis subsp. lactis (strain IL1403) (Streptococcus lactis).